Reading from the N-terminus, the 1031-residue chain is MMS19 nucleotide excision repair protein homolog (1031 aa).

At Ala-2 the chain carries N-acetylalanine. HEAT repeat units lie at residues 867–905 (QRFFTDNVPALVQGFHAAPQDVKPNYLKGLSHVLNRLPK), 909–947 (LPELPTLLSLLLEALSCPDSVVQLSTLSCLQPLLLEAPQ), 950–988 (SLHVDTLVTKFLNLSSSYSMAVRIAALQCMHALTRLPTS), and 991–1029 (LPYKSQVIRALAKPLDDKKRLVRKEAVSARGEWFLLGSP). A Phosphoserine modification is found at Ser-1028.

Belongs to the MET18/MMS19 family. In terms of assembly, component of the CIA complex. In the CIA complex, interacts directly with CIAO2B and CIAO3. Component of the MMXD complex, composed of CIAO1, ERCC2, CIAO2B, MMS19 and SLC25A5. Interacts with CIAO2B; the interaction is direct. Interacts with ERCC2/XPD; the interaction is direct. Interacts with ERCC3/XPB and NCOA3/RAC3. Interacts with RTEL1; the interaction mediates the association of RTEL1 with the CIA complex. Interacts with BRIP1. Interacts with KIF4A; the interaction facilitates the transfer of Fe-S clusters to KIF4A to ensure proper localization of KIF4A to the mitotic machinery components. Interacts with CCDC117; the interaction is indirect. Ubiquitinated; undergoes 'Lys-48'-linked polyubiquitination. In terms of tissue distribution, ubiquitously expressed with higher expression in testis.

Its subcellular location is the nucleus. It is found in the cytoplasm. The protein localises to the cytoskeleton. The protein resides in the spindle. Its function is as follows. Key component of the cytosolic iron-sulfur protein assembly (CIA) complex, a multiprotein complex that mediates the incorporation of iron-sulfur cluster into apoproteins specifically involved in DNA metabolism and genomic integrity. In the CIA complex, MMS19 acts as an adapter between early-acting CIA components and a subset of cellular target Fe/S proteins such as ERCC2/XPD, FANCJ and RTEL1, thereby playing a key role in nucleotide excision repair (NER), homologous recombination-mediated double-strand break DNA repair, DNA replication and RNA polymerase II (POL II) transcription. As a CIA complex component and in collaboration with CIAO1 and CIAO2, binds to and facilitates the assembly of most cytosolic-nuclear Fe/S proteins. As part of the mitotic spindle-associated MMXD complex, plays a role in chromosome segregation, probably by facilitating iron-sulfur cluster assembly into ERCC2/XPD. Together with CIAO2, facilitates the transfer of Fe-S clusters to the motor protein KIF4A, which ensures proper localization of KIF4A to mitotic machinery components to promote the progression of mitosis. Indirectly acts as a transcriptional coactivator of estrogen receptor (ER), via its role in iron-sulfur insertion into some component of the TFIIH-machinery. In Mus musculus (Mouse), this protein is MMS19 nucleotide excision repair protein homolog.